Here is a 36-residue protein sequence, read N- to C-terminus: Pancreatic polypeptide (36 aa).

Tyrosine 36 carries the tyrosine amide modification.

Belongs to the NPY family.

The protein resides in the secreted. Hormone secreted by pancreatic cells that acts as a regulator of pancreatic and gastrointestinal functions probably by signaling through the G protein-coupled receptor NPY4R2. The polypeptide is Pancreatic polypeptide (PPY) (Tapirus pinchaque (Mountain tapir)).